A 255-amino-acid chain; its full sequence is tRNA1(Val) (adenine(37)-N6)-methyltransferase (255 aa).

It belongs to the methyltransferase superfamily. tRNA (adenine-N(6)-)-methyltransferase family.

It localises to the cytoplasm. It catalyses the reaction adenosine(37) in tRNA1(Val) + S-adenosyl-L-methionine = N(6)-methyladenosine(37) in tRNA1(Val) + S-adenosyl-L-homocysteine + H(+). Its function is as follows. Specifically methylates the adenine in position 37 of tRNA(1)(Val) (anticodon cmo5UAC). The chain is tRNA1(Val) (adenine(37)-N6)-methyltransferase from Porphyromonas gingivalis (strain ATCC 33277 / DSM 20709 / CIP 103683 / JCM 12257 / NCTC 11834 / 2561).